The following is a 568-amino-acid chain: Fumarate hydratase 2 (568 aa).

Cysteine 133 is a binding site for [4Fe-4S] cluster. (S)-malate is bound by residues 134 to 135 (QD), arginine 173, glycine 216, and 219 to 225 (NKAYLYQ). The [4Fe-4S] cluster site is built by cysteine 252 and cysteine 346. Residues arginine 421, 467–471 (TTAGR), and lysine 491 contribute to the (S)-malate site.

This sequence belongs to the class-I fumarase family. Homodimer. [4Fe-4S] cluster serves as cofactor.

The protein resides in the cytoplasm. It is found in the cytosol. The catalysed reaction is (S)-malate = fumarate + H2O. With respect to regulation, specifically and competitively inhibited by 2-thiomalate, which coordinates with the catalytic [4Fe-4S] cluster. Weakly inhibited by malonate. Its function is as follows. Cytosolic fumarate hydratase that catalyzes the reversible hydration of fumarate to (S)-malate. This is Fumarate hydratase 2 from Leishmania major.